Consider the following 457-residue polypeptide: Solute carrier family 38 member 6 (457 aa).

An N-acetylmethionine modification is found at Met-1. Residues Ser-4 and Ser-7 each carry the phosphoserine modification. 5 helical membrane-spanning segments follow: residues 48 to 68 (FGLSVFNVMNAIMGSGILGLA), 70 to 90 (VMANTGILGFSFLLLFVALLA), 112 to 132 (LGLFAFGLPGKVVVAGTIIIQ), 171 to 191 (LLIIICVGIVFPLSLLPKIGF), and 192 to 212 (LGYTSSLSFFFMVFFALVVVI). Residues Cys-219 and Cys-239 are joined by a disulfide bond. 6 helical membrane-spanning segments follow: residues 251–271 (VYAIPTMAFSFLCHTSVLPIY), 289–309 (AIALSFLVYFVSALFGYLTFY), 328–348 (VIVMAVKLCILFAVLLTAPLI), 372–392 (SLTTAALNAIIVVLAIYVPDI), 395–415 (VFGVVGASTSTCLIFVFPGLF), and 432–452 (ALFLLLTGAVVGSFSLVLIIF).

It belongs to the amino acid/polyamine transporter 2 family. Expressed exclusively in neurons and not in astrocytes and glia cells. Highly expressed in the synapse. Highly expressed in glutamatergic neurons. Primarily expressed in excitatory neurons, with some minor expression in inhibitory neurons.

Its subcellular location is the cell membrane. It localises to the synapse. It catalyses the reaction L-glutamine(out) = L-glutamine(in). The enzyme catalyses L-glutamate(out) = L-glutamate(in). In terms of biological role, amino acid transporter with an apparent selectivity for L-glutamine and L-glutamate. May facilitate glutamine uptake in excitatory neurons. The transport mechanism remains to be elucidated. This is Solute carrier family 38 member 6 from Mus musculus (Mouse).